Here is a 297-residue protein sequence, read N- to C-terminus: ATP synthase gamma chain (297 aa).

The protein belongs to the ATPase gamma chain family. As to quaternary structure, F-type ATPases have 2 components, CF(1) - the catalytic core - and CF(0) - the membrane proton channel. CF(1) has five subunits: alpha(3), beta(3), gamma(1), delta(1), epsilon(1). CF(0) has three main subunits: a, b and c.

It localises to the cell membrane. In terms of biological role, produces ATP from ADP in the presence of a proton gradient across the membrane. The gamma chain is believed to be important in regulating ATPase activity and the flow of protons through the CF(0) complex. This is ATP synthase gamma chain from Micrococcus luteus (strain ATCC 4698 / DSM 20030 / JCM 1464 / CCM 169 / CCUG 5858 / IAM 1056 / NBRC 3333 / NCIMB 9278 / NCTC 2665 / VKM Ac-2230) (Micrococcus lysodeikticus).